We begin with the raw amino-acid sequence, 345 residues long: Galacturonate transporter (345 aa).

Positions 1–32 are cleaved as a signal peptide; it reads MFKIKGLRWYMIGLVTIGTVLGYLTRNAIAAA. 8 consecutive transmembrane segments (helical) span residues 49–69, 76–96, 100–120, 139–159, 165–185, 237–257, 265–285, and 304–324; these read YIIA…GYVL, VGYA…ALAN, GLAV…PAGL, FNVG…WAIM, MAFL…LYFY, FLAE…MFKA, IAMF…LGGY, and LVVT…LFTS.

The protein belongs to the major facilitator superfamily. Phthalate permease family.

It localises to the cell inner membrane. The enzyme catalyses aldehydo-D-galacturonate(out) + H(+)(out) = aldehydo-D-galacturonate(in) + H(+)(in). Its activity is regulated as follows. Inhibited by cyanide and 2,4-dinitrophenol, but not by arsenate. In terms of biological role, transport of D-galacturonate. Cannot transport the dimer digalacturonic acid. Uptake is an active process. This is Galacturonate transporter from Dickeya chrysanthemi (Pectobacterium chrysanthemi).